The chain runs to 110 residues: Large ribosomal subunit protein uL22 (110 aa).

Belongs to the universal ribosomal protein uL22 family. In terms of assembly, part of the 50S ribosomal subunit.

This protein binds specifically to 23S rRNA; its binding is stimulated by other ribosomal proteins, e.g. L4, L17, and L20. It is important during the early stages of 50S assembly. It makes multiple contacts with different domains of the 23S rRNA in the assembled 50S subunit and ribosome. Functionally, the globular domain of the protein is located near the polypeptide exit tunnel on the outside of the subunit, while an extended beta-hairpin is found that lines the wall of the exit tunnel in the center of the 70S ribosome. This is Large ribosomal subunit protein uL22 from Enterobacter sp. (strain 638).